The sequence spans 187 residues: Cerebral dopamine neurotrophic factor (187 aa).

The signal sequence occupies residues 1-24 (MRCISPTALVTFCAGFCISNPVLA). 3 cysteine pairs are disulfide-bonded: Cys-37–Cys-124, Cys-40–Cys-113, and Cys-71–Cys-82.

Belongs to the ARMET family. In terms of tissue distribution, expressed at high levels in the heart, skeletal muscle, testis and brain (at protein level). In the brain, detected in the cerebral cortex neurons through layers II to VI. In the hippocampus, detected in the CA1 to CA3 pyramidal regions and in the granule and polymorph layers of dentate gyrus. Weak expression in the striatum. In substantia nigra, detected in solitary cells that did not express tyrosine hydroxylase, a marker for dopaminergic neurons. Relatively high expression in the Purkinje cells of the cerebellum and in regions of the brain stem, including the locus coeruleus.

The protein resides in the secreted. Functionally, trophic factor for dopamine neurons. Prevents the 6-hydroxydopamine (6-OHDA)-induced degeneration of dopaminergic neurons. When administered after 6-OHDA-lesioning, restores the dopaminergic function and prevents the degeneration of dopaminergic neurons in substantia nigra. The polypeptide is Cerebral dopamine neurotrophic factor (Cdnf) (Mus musculus (Mouse)).